A 153-amino-acid chain; its full sequence is UPF0735 ACT domain-containing protein FN1487 (153 aa).

Residues 76-152 enclose the ACT domain; that stretch reads SLHLSLKDRV…GIADIRITGS (77 aa).

The protein belongs to the UPF0735 family.

The protein is UPF0735 ACT domain-containing protein FN1487 of Fusobacterium nucleatum subsp. nucleatum (strain ATCC 25586 / DSM 15643 / BCRC 10681 / CIP 101130 / JCM 8532 / KCTC 2640 / LMG 13131 / VPI 4355).